Reading from the N-terminus, the 378-residue chain is 1-acyl-sn-glycerol-3-phosphate acyltransferase delta (378 aa).

Residues 11–31 (FLCHLVFCYVFIASGLIINTI) traverse the membrane as a helical segment. The HXXXXD motif signature appears at 96–101 (HKFEID). 3 helical membrane-spanning segments follow: residues 125–145 (ELAY…VFCS), 307–327 (TLVN…QFLV), and 338–358 (LASF…MIGV).

It belongs to the 1-acyl-sn-glycerol-3-phosphate acyltransferase family.

It is found in the endoplasmic reticulum membrane. It carries out the reaction a 1-acyl-sn-glycero-3-phosphate + an acyl-CoA = a 1,2-diacyl-sn-glycero-3-phosphate + CoA. It catalyses the reaction (4Z,7Z,10Z,13Z,16Z,19Z)-docosahexaenoyl-CoA + 1-hexadecanoyl-sn-glycero-3-phosphate = 1-hexadecanoyl-2-(4Z,7Z,10Z,13Z,16Z,19Z-docosahexaenoyl)-sn-glycero-3-phosphate + CoA. The catalysed reaction is 1-octadecanoyl-sn-glycero-3-phosphate + (9Z,12Z)-octadecadienoyl-CoA = 1-octadecanoyl-2-(9Z,12Z-octadecadienoyl)-sn-glycero-3-phosphate + CoA. The enzyme catalyses 1-octadecanoyl-sn-glycero-3-phosphate + (4Z,7Z,10Z,13Z,16Z,19Z)-docosahexaenoyl-CoA = 1-octadecanoyl-2-(4Z,7Z,10Z,13Z,16Z,19Z-docosahexaenoyl)-sn-glycero-3-phosphate + CoA. It carries out the reaction (4Z,7Z,10Z,13Z,16Z,19Z)-docosahexaenoyl-CoA + 1-(9Z-octadecenoyl)-sn-glycero-3-phosphate = 1-(9Z-octadecenoyl)-2-(4Z,7Z,10Z,13Z,16Z,19Z-docosahexaenoyl)-sn-glycero-3-phosphate + CoA. The protein operates within phospholipid metabolism; CDP-diacylglycerol biosynthesis; CDP-diacylglycerol from sn-glycerol 3-phosphate: step 2/3. Its function is as follows. Converts 1-acyl-sn-glycerol-3-phosphate (lysophosphatidic acid or LPA) into 1,2-diacyl-sn-glycerol-3-phosphate (phosphatidic acid or PA) by incorporating an acyl moiety at the sn-2 position of the glycerol backbone. Exhibits high acyl-CoA specificity for polyunsaturated fatty acyl-CoA, especially docosahexaenoyl-CoA (22:6-CoA, DHA-CoA). In Pongo abelii (Sumatran orangutan), this protein is 1-acyl-sn-glycerol-3-phosphate acyltransferase delta (AGPAT4).